The chain runs to 194 residues: uncharacterized protein (194 aa).

The tract at residues 45 to 138 is disordered; sequence QLLGVPEQHR…AGPPRGDWGV (94 aa). Phosphoserine occurs at positions 69 and 76. The span at 97-106 shows a compositional bias: pro residues; sequence PPLPPPPVLP. Positions 107 to 116 are enriched in low complexity; that stretch reads GPGEELPGAR. Over residues 117 to 128 the composition is skewed to gly residues; that stretch reads LPGGGGDDGAGR.

This is an uncharacterized protein from Homo sapiens (Human).